Consider the following 1207-residue polypeptide: DNA-directed RNA polymerase subunit beta' (1207 aa).

Zn(2+) is bound by residues C60, C62, C75, and C78. Mg(2+)-binding residues include D450, D452, and D454. The Zn(2+) site is built by C818, C892, C899, and C902.

The protein belongs to the RNA polymerase beta' chain family. In terms of assembly, the RNAP catalytic core consists of 2 alpha, 1 beta, 1 beta' and 1 omega subunit. When a sigma factor is associated with the core the holoenzyme is formed, which can initiate transcription. The cofactor is Mg(2+). Zn(2+) is required as a cofactor.

It catalyses the reaction RNA(n) + a ribonucleoside 5'-triphosphate = RNA(n+1) + diphosphate. DNA-dependent RNA polymerase catalyzes the transcription of DNA into RNA using the four ribonucleoside triphosphates as substrates. The chain is DNA-directed RNA polymerase subunit beta' from Lactococcus lactis subsp. cremoris (strain MG1363).